The sequence spans 549 residues: CDK5RAP3 protein homolog (549 aa).

3 short sequence motifs (shuffled ATG8-binding motif) span residues 274-277 (IDWD), 285-288 (IDWD), and 333-336 (ISWD).

This sequence belongs to the CDK5RAP3 family. As to quaternary structure, substrate adapter component of the UFM1 ribosome E3 ligase (UREL) complex. Interacts with ATG8 family proteins.

Substrate adapter of E3 ligase complexes mediating ufmylation, the covalent attachment of the ubiquitin-like modifier UFM1 to substrate proteins, and which is involved in various processes, such as ribosome recycling and reticulophagy (also called ER-phagy). This Arabidopsis thaliana (Mouse-ear cress) protein is CDK5RAP3 protein homolog.